The sequence spans 245 residues: 1-(5-phosphoribosyl)-5-[(5-phosphoribosylamino)methylideneamino] imidazole-4-carboxamide isomerase (245 aa).

Asp-7 functions as the Proton acceptor in the catalytic mechanism. Asp-129 functions as the Proton donor in the catalytic mechanism.

It belongs to the HisA/HisF family.

It is found in the cytoplasm. The enzyme catalyses 1-(5-phospho-beta-D-ribosyl)-5-[(5-phospho-beta-D-ribosylamino)methylideneamino]imidazole-4-carboxamide = 5-[(5-phospho-1-deoxy-D-ribulos-1-ylimino)methylamino]-1-(5-phospho-beta-D-ribosyl)imidazole-4-carboxamide. It functions in the pathway amino-acid biosynthesis; L-histidine biosynthesis; L-histidine from 5-phospho-alpha-D-ribose 1-diphosphate: step 4/9. This is 1-(5-phosphoribosyl)-5-[(5-phosphoribosylamino)methylideneamino] imidazole-4-carboxamide isomerase from Escherichia coli O7:K1 (strain IAI39 / ExPEC).